The sequence spans 1164 residues: Hamartin (1164 aa).

A Glycyl lysine isopeptide (Lys-Gly) (interchain with G-Cter in ubiquitin) cross-link involves residue Lys30. The tract at residues 403 to 787 (SDDYVHISLP…QIRQLQHDRE (385 aa)) is mediates interaction with WDR45B. Positions 439 to 571 (LNDRGSEEPP…ADESPAGDRE (133 aa)) are disordered. Positions 474–487 (EKDKEEAAISRELS) are enriched in basic and acidic residues. Ser487, Ser505, Ser511, Ser521, and Ser598 each carry phosphoserine. Positions 513–530 (PGSQRKTHSAASSSQGAS) are enriched in polar residues. Positions 721–997 (RKVIKAAALE…AAEERLDCCN (277 aa)) form a coiled coil. Residues 1006–1085 (GHNEEASGHN…TTVGSLPSSK (80 aa)) are disordered. Positions 1007–1020 (HNEEASGHNGETKT) are enriched in basic and acidic residues. Positions 1073 to 1085 (SIPTTVGSLPSSK) are enriched in polar residues. Residue Ser1100 is modified to Phosphoserine. The segment at 1131-1164 (IPLNLDGPHPSPPTPDSVGQLHIMDYNETHHEHS) is disordered. Residues 1155–1164 (DYNETHHEHS) show a composition bias toward basic and acidic residues.

Component of the TSC-TBC complex (also named Rhebulator complex), composed of 2 molecules of TSC1, 2 molecules of TSC2 and 1 molecule of TBC1D7. Probably forms a complex composed of chaperones HSP90 and HSP70, co-chaperones STIP1/HOP, CDC37, PPP5C, PTGES3/p23, TSC1 and client protein TSC2. Forms a complex composed of chaperones HSP90 and HSP70, co-chaperones CDC37, PPP5C, TSC1 and client protein TSC2, CDK4, AKT, RAF1 and NR3C1; this complex does not contain co-chaperones STIP1/HOP and PTGES3/p23. Forms a complex containing HSP90AA1, TSC1 and TSC2; TSC1 is required to recruit TCS2 to the complex. Interacts (via C-terminus) with the closed form of HSP90AA1 (via the middle domain and TPR repeat-binding motif). Interacts with DOCK7. Interacts with FBXW5. Interacts with WDR45B. Interacts with RPAP3 and URI1. Phosphorylation at Ser-505 does not affect interaction with TSC2. Post-translationally, 'Lys-63'-linked ubiquitinated at Lys-30 by PELI1; the ubiquitination promotes TSC1/TSC2 complex stability. In terms of tissue distribution, highly expressed in skeletal muscle, followed by heart, brain, placenta, pancreas, lung, liver and kidney. Also expressed in embryonic kidney cells.

Its subcellular location is the lysosome membrane. The protein localises to the cytoplasm. The protein resides in the cytosol. Functionally, non-catalytic component of the TSC-TBC complex, a multiprotein complex that acts as a negative regulator of the canonical mTORC1 complex, an evolutionarily conserved central nutrient sensor that stimulates anabolic reactions and macromolecule biosynthesis to promote cellular biomass generation and growth. The TSC-TBC complex acts as a GTPase-activating protein (GAP) for the small GTPase RHEB, a direct activator of the protein kinase activity of mTORC1. In absence of nutrients, the TSC-TBC complex inhibits mTORC1, thereby preventing phosphorylation of ribosomal protein S6 kinase (RPS6KB1 and RPS6KB2) and EIF4EBP1 (4E-BP1) by the mTORC1 signaling. The TSC-TBC complex is inactivated in response to nutrients, relieving inhibition of mTORC1. Within the TSC-TBC complex, TSC1 stabilizes TSC2 and prevents TSC2 self-aggregation. Acts as a tumor suppressor. Involved in microtubule-mediated protein transport via its ability to regulate mTORC1 signaling. Also acts as a co-chaperone for HSP90AA1 facilitating HSP90AA1 chaperoning of protein clients such as kinases, TSC2 and glucocorticoid receptor NR3C1. Increases ATP binding to HSP90AA1 and inhibits HSP90AA1 ATPase activity. Competes with the activating co-chaperone AHSA1 for binding to HSP90AA1, thereby providing a reciprocal regulatory mechanism for chaperoning of client proteins. Recruits TSC2 to HSP90AA1 and stabilizes TSC2 by preventing the interaction between TSC2 and ubiquitin ligase HERC1. In Homo sapiens (Human), this protein is Hamartin.